Reading from the N-terminus, the 263-residue chain is MPEGPEIRRAADNLEAAIKGKPLTDVWFAFAQLKPYESQLTGQIVTRIETRGKALLTHFSNGLTLYSHNQLYGVWRVIDTGEIPQTTRILRVRLQTADKTILLYSASDIEMLTADQLTTHPFLQRVGPDVLDARLTPEEVKARLLSPRFRNRQFSGLLLDQAFLAGLGNYLRVEILWQVGLTGQHKAKDLNEAQLNALSHALLDIPRLSYTTRGQADENKHHGALFRFKVFHRDGEACERCGGIIEKTTLSSRPFYWCPHCQK.

The active-site Schiff-base intermediate with DNA is P2. E3 serves as the catalytic Proton donor. Residue K53 is the Proton donor; for beta-elimination activity of the active site. Q70, R125, and N169 together coordinate DNA. Residues 229-263 (KVFHRDGEACERCGGIIEKTTLSSRPFYWCPHCQK) form an FPG-type zinc finger. R253 serves as the catalytic Proton donor; for delta-elimination activity.

This sequence belongs to the FPG family. The cofactor is Zn(2+).

It carries out the reaction 2'-deoxyribonucleotide-(2'-deoxyribose 5'-phosphate)-2'-deoxyribonucleotide-DNA = a 3'-end 2'-deoxyribonucleotide-(2,3-dehydro-2,3-deoxyribose 5'-phosphate)-DNA + a 5'-end 5'-phospho-2'-deoxyribonucleoside-DNA + H(+). Its function is as follows. Involved in base excision repair of DNA damaged by oxidation or by mutagenic agents. Acts as a DNA glycosylase that recognizes and removes damaged bases. Has a preference for oxidized pyrimidines, such as thymine glycol, 5,6-dihydrouracil and 5,6-dihydrothymine. Has AP (apurinic/apyrimidinic) lyase activity and introduces nicks in the DNA strand. Cleaves the DNA backbone by beta-delta elimination to generate a single-strand break at the site of the removed base with both 3'- and 5'-phosphates. This Salmonella schwarzengrund (strain CVM19633) protein is Endonuclease 8.